Here is a 495-residue protein sequence, read N- to C-terminus: Trigger factor (495 aa).

The PPIase FKBP-type domain maps to 162-243 (DDFVSIDLSA…VKSLKERELP (82 aa)). The segment covering 425–437 (DTDGNEIDPKEYF) has biased composition (basic and acidic residues). Residues 425–495 (DTDGNEIDPK…TDDDSENAEK (71 aa)) are disordered. Low complexity predominate over residues 450–461 (SADAEASENSEA). Acidic residues predominate over residues 486–495 (TDDDSENAEK).

This sequence belongs to the FKBP-type PPIase family. Tig subfamily.

The protein localises to the cytoplasm. It catalyses the reaction [protein]-peptidylproline (omega=180) = [protein]-peptidylproline (omega=0). In terms of biological role, involved in protein export. Acts as a chaperone by maintaining the newly synthesized protein in an open conformation. Functions as a peptidyl-prolyl cis-trans isomerase. This chain is Trigger factor, found in Corynebacterium kroppenstedtii (strain DSM 44385 / JCM 11950 / CIP 105744 / CCUG 35717).